We begin with the raw amino-acid sequence, 356 residues long: Probable protein phosphatase 2C T23F11.1 (356 aa).

The PPM-type phosphatase domain occupies 23 to 286 (LVGSSCMQGW…DNMTVVLVGL (264 aa)). Mn(2+)-binding residues include Asp-59, Gly-60, Asp-228, and Asp-277. Positions 336–356 (NAANQEEEEDDNEPAPANFQV) are disordered.

It belongs to the PP2C family. Requires Mg(2+) as cofactor. Mn(2+) serves as cofactor.

The catalysed reaction is O-phospho-L-seryl-[protein] + H2O = L-seryl-[protein] + phosphate. It catalyses the reaction O-phospho-L-threonyl-[protein] + H2O = L-threonyl-[protein] + phosphate. This is Probable protein phosphatase 2C T23F11.1 (ppm-2) from Caenorhabditis elegans.